The following is a 314-amino-acid chain: Probable cell division protein WhiA (314 aa).

The H-T-H motif DNA-binding region spans 274–308; it reads SLKELGEMMSTGKISKSGVNHRLRKLNEMADKLRS.

It belongs to the WhiA family.

Its function is as follows. Involved in cell division and chromosome segregation. The sequence is that of Probable cell division protein WhiA from Staphylococcus saprophyticus subsp. saprophyticus (strain ATCC 15305 / DSM 20229 / NCIMB 8711 / NCTC 7292 / S-41).